A 103-amino-acid chain; its full sequence is Co-chaperonin GroES (103 aa).

Belongs to the GroES chaperonin family. In terms of assembly, heptamer of 7 subunits arranged in a ring. Interacts with the chaperonin GroEL.

It localises to the cytoplasm. In terms of biological role, together with the chaperonin GroEL, plays an essential role in assisting protein folding. The GroEL-GroES system forms a nano-cage that allows encapsulation of the non-native substrate proteins and provides a physical environment optimized to promote and accelerate protein folding. GroES binds to the apical surface of the GroEL ring, thereby capping the opening of the GroEL channel. In Prochlorococcus marinus (strain MIT 9313), this protein is Co-chaperonin GroES.